We begin with the raw amino-acid sequence, 243 residues long: RNA-binding protein with serine-rich domain 1 homolog (243 aa).

The interval 48-92 (SSTRQFNNTRSPSGRSASRSSNFSHRSSSRDSFSSNRSYSSSLSR) is disordered. Low complexity predominate over residues 57–92 (RSPSGRSASRSSNFSHRSSSRDSFSSNRSYSSSLSR). Residues 99–177 (RTILVENLTR…EELFVSIKRF (79 aa)) form the RRM domain. Residues 189-243 (YENSYRPSRSQNNSHYNDKSFHRSRYSRARSRSPGSNISEYSDQSPPYHSYRHRP) are disordered. Residues 193–203 (YRPSRSQNNSH) are compositionally biased toward polar residues. Basic residues predominate over residues 210–219 (HRSRYSRARS). Polar residues predominate over residues 222–235 (PGSNISEYSDQSPP).

Belongs to the splicing factor SR family. In terms of assembly, component of the active spliceosome.

It is found in the cytoplasm. The protein localises to the nucleus. Its function is as follows. Putative component of the spliceosome which enhances the formation of the ATP-dependent A complex of the spliceosome. may participate in mRNA 3'-end cleavage. Also mediates increase of mRNA abundance and translational efficiency. The chain is RNA-binding protein with serine-rich domain 1 homolog from Schizosaccharomyces pombe (strain 972 / ATCC 24843) (Fission yeast).